Reading from the N-terminus, the 429-residue chain is Growth/differentiation factor 2 (429 aa).

The N-terminal stretch at 1-22 (MCPGALWVALPLLSLLAGSLQG) is a signal peptide. The propeptide occupies 23-319 (KPLQSWGRGS…AGSTLARRKR (297 aa)). N-linked (GlcNAc...) asparagine glycans are attached at residues N71 and N136. Residues 283–301 (VLKKLSKDGSTEAGESSHE) are compositionally biased toward basic and acidic residues. The disordered stretch occupies residues 283-308 (VLKKLSKDGSTEAGESSHEEDTDGHV). 3 disulfide bridges follow: C327–C393, C356–C426, and C360–C428. The segment at 402–416 (SVLYKDDMGVPTLKY) is interaction with ENG.

The protein belongs to the TGF-beta family. As to quaternary structure, homodimer; disulfide-linked. Detected in extracellular fluid as mature homodimer, and in complex with its propeptide. Interacts with ACVRL1, BMPR2 and ACVR2B with high affinity (in vitro). Identified in a complex with ACVRL1 and ACVR2B. Has ten times lower affinity for ACVR2A (in vitro). Interacts with ENG, forming a heterotetramer with a 2:2 stoichiometry. Can form a heteromeric complex with ENG and ACVRL1. Interacts with type I receptor ACVR1. In terms of processing, a reversible disulfide bond can be formed between the two subunits in the homodimer; this has no effect on GDF2 activity. Detected in blood plasma (at protein level).

Its subcellular location is the secreted. Functionally, potent circulating inhibitor of angiogenesis. Signals through the type I activin receptor ACVRL1 but not other Alks. Signaling through SMAD1 in endothelial cells requires TGF-beta coreceptor endoglin/ENG. This Homo sapiens (Human) protein is Growth/differentiation factor 2 (GDF2).